A 447-amino-acid polypeptide reads, in one-letter code: Ribulose bisphosphate carboxylase large chain (447 aa).

Lys-5 bears the N6,N6,N6-trimethyllysine mark. Residues Asn-114 and Thr-164 each contribute to the substrate site. The Proton acceptor role is filled by Lys-166. Lys-168 is a substrate binding site. Mg(2+) is bound by residues Lys-192, Asp-194, and Glu-195. Lys-192 carries the post-translational modification N6-carboxylysine. Catalysis depends on His-285, which acts as the Proton acceptor. Residues Arg-286, His-318, and Ser-370 each contribute to the substrate site.

The protein belongs to the RuBisCO large chain family. Type I subfamily. Heterohexadecamer of 8 large chains and 8 small chains; disulfide-linked. The disulfide link is formed within the large subunit homodimers. Mg(2+) is required as a cofactor. The disulfide bond which can form in the large chain dimeric partners within the hexadecamer appears to be associated with oxidative stress and protein turnover.

The protein resides in the plastid. Its subcellular location is the chloroplast. It catalyses the reaction 2 (2R)-3-phosphoglycerate + 2 H(+) = D-ribulose 1,5-bisphosphate + CO2 + H2O. The enzyme catalyses D-ribulose 1,5-bisphosphate + O2 = 2-phosphoglycolate + (2R)-3-phosphoglycerate + 2 H(+). RuBisCO catalyzes two reactions: the carboxylation of D-ribulose 1,5-bisphosphate, the primary event in carbon dioxide fixation, as well as the oxidative fragmentation of the pentose substrate in the photorespiration process. Both reactions occur simultaneously and in competition at the same active site. The polypeptide is Ribulose bisphosphate carboxylase large chain (Camassia leichtlinii (Western quamash)).